The sequence spans 341 residues: Anthranilate phosphoribosyltransferase (341 aa).

Residues Gly81, 84–85 (GD), Ser89, 91–94 (NIST), 109–117 (KHGNRSASS), and Ser121 contribute to the 5-phospho-alpha-D-ribose 1-diphosphate site. An anthranilate-binding site is contributed by Gly81. Ser93 is a Mg(2+) binding site. Asn112 is an anthranilate binding site. Anthranilate is bound at residue Arg167. Residues Asp225 and Glu226 each contribute to the Mg(2+) site.

It belongs to the anthranilate phosphoribosyltransferase family. Homodimer. Mg(2+) is required as a cofactor.

The catalysed reaction is N-(5-phospho-beta-D-ribosyl)anthranilate + diphosphate = 5-phospho-alpha-D-ribose 1-diphosphate + anthranilate. Its pathway is amino-acid biosynthesis; L-tryptophan biosynthesis; L-tryptophan from chorismate: step 2/5. Catalyzes the transfer of the phosphoribosyl group of 5-phosphorylribose-1-pyrophosphate (PRPP) to anthranilate to yield N-(5'-phosphoribosyl)-anthranilate (PRA). This is Anthranilate phosphoribosyltransferase from Nocardioides sp. (strain ATCC BAA-499 / JS614).